Reading from the N-terminus, the 29-residue chain is Toxin Bl-4 (29 aa).

This sequence belongs to the long (4 C-C) scorpion toxin superfamily. Sodium channel inhibitor family. Beta subfamily. Expressed by the venom gland.

It localises to the secreted. In terms of biological role, excitatory insect beta-toxins induce a spastic paralysis. They bind voltage-independently at site-4 of sodium channels (Nav) and shift the voltage of activation toward more negative potentials thereby affecting sodium channel activation and promoting spontaneous and repetitive firing. The fraction to which this protein belongs exhibits low toxicity and induces transient paralysis in all insects tested (the crickets A.domesticus). In Buthacus leptochelys (Egyptian fat-tailed scorpion), this protein is Toxin Bl-4.